We begin with the raw amino-acid sequence, 312 residues long: F-box protein At1g11270 (312 aa).

One can recognise an F-box domain in the interval 29-80 (SVVKLLLPHDVVGLILERLPVESLLRFKCVSNQWKSTIESQCFQERQLIRRM).

This is F-box protein At1g11270 from Arabidopsis thaliana (Mouse-ear cress).